Consider the following 271-residue polypeptide: MKVLQLIALTALVSSCVAASAADPSGLAKTKSDVDVLSRVLADHEQTNRSLRRYDLEGLDSVNSNREERNSITMVDDVVTKASGLVDDVMGKTDDVVGKAGQFGKVPTKLRDVATKNMDKIKEMTARSALVKTLTGRYDYAEKLSLSALKQLDDIEKVRAVDIKKGIKGSKETPDGMRRVIEPFEGMKVAPKKFLESHVGRADQRYGKDGSRLLSANVVMRLNDKGEKQILLISSSNPKKGDFLLPKGGWDKGEDVKKAALREVIEEGGVR.

Positions Met-1–Ala-18 are cleaved as a signal peptide. The RxLR-dEER signature appears at Arg-49–Arg-69. The region spanning Arg-212–Arg-271 is the Nudix hydrolase domain. The Nudix box motif lies at Gly-248 to Gly-269.

This sequence in the N-terminal section; belongs to the RxLR effector family. In the C-terminal section; belongs to the Nudix hydrolase family.

It localises to the secreted. The protein localises to the host cytoplasm. Its subcellular location is the host nucleus. Functionally, effector that enhances P.infestans colonization of Nicotiana benthamiana leaves. The protein is RxLR effector protein PITG_15679 of Phytophthora infestans (strain T30-4) (Potato late blight agent).